The following is a 206-amino-acid chain: ATP-dependent Clp protease proteolytic subunit (206 aa).

Serine 108 functions as the Nucleophile in the catalytic mechanism. Histidine 133 is a catalytic residue.

Belongs to the peptidase S14 family. Fourteen ClpP subunits assemble into 2 heptameric rings which stack back to back to give a disk-like structure with a central cavity, resembling the structure of eukaryotic proteasomes.

The protein resides in the cytoplasm. The catalysed reaction is Hydrolysis of proteins to small peptides in the presence of ATP and magnesium. alpha-casein is the usual test substrate. In the absence of ATP, only oligopeptides shorter than five residues are hydrolyzed (such as succinyl-Leu-Tyr-|-NHMec, and Leu-Tyr-Leu-|-Tyr-Trp, in which cleavage of the -Tyr-|-Leu- and -Tyr-|-Trp bonds also occurs).. Functionally, cleaves peptides in various proteins in a process that requires ATP hydrolysis. Has a chymotrypsin-like activity. Plays a major role in the degradation of misfolded proteins. The sequence is that of ATP-dependent Clp protease proteolytic subunit from Chromohalobacter salexigens (strain ATCC BAA-138 / DSM 3043 / CIP 106854 / NCIMB 13768 / 1H11).